Reading from the N-terminus, the 64-residue chain is Large ribosomal subunit protein bL33c (64 aa).

This sequence belongs to the bacterial ribosomal protein bL33 family.

Its subcellular location is the plastid. The protein localises to the chloroplast. The sequence is that of Large ribosomal subunit protein bL33c (rpl33) from Mesostigma viride (Green alga).